A 436-amino-acid chain; its full sequence is GTPase Der (436 aa).

EngA-type G domains lie at 3–167 and 177–352; these read NIVA…PIKP and PRFA…ENRQ. GTP-binding positions include 9–16, 56–60, 119–122, 183–190, 230–234, and 295–298; these read GRPNVGKS, DTGGY, NKVD, GRPNAGKS, DTAGI, and NKWD. Positions 353–436 constitute a KH-like domain; sequence QRISTSKFNE…VPIDIYIREK (84 aa).

Belongs to the TRAFAC class TrmE-Era-EngA-EngB-Septin-like GTPase superfamily. EngA (Der) GTPase family. As to quaternary structure, associates with the 50S ribosomal subunit.

GTPase that plays an essential role in the late steps of ribosome biogenesis. The polypeptide is GTPase Der (Flavobacterium psychrophilum (strain ATCC 49511 / DSM 21280 / CIP 103535 / JIP02/86)).